The sequence spans 534 residues: Protein tweety homolog 2 (534 aa).

Topologically, residues 1 to 44 (MATARVEYIAPWWVYWLHNLPHVDFSLQRESGDFNPKDPGYQQT) are extracellular. A helical transmembrane segment spans residues 45-65 (LLFVALFIALCAAVNLLFVSG). The Cytoplasmic segment spans residues 66–87 (YLICLCCCKKEDETETKMTSSC). A helical transmembrane segment spans residues 88–108 (CVTWTAAVSGLLCCAAVGIGF). Residues 109-213 (YGNSETNDGV…NASIIEYYRW (105 aa)) lie on the Extracellular side of the membrane. Glu-113 and Asp-116 together coordinate Ca(2+). N-linked (GlcNAc...) asparagine glycosylation occurs at Asn-129. The RGD signature appears at 164-166 (RGD). N-linked (GlcNAc...) asparagine glycosylation is found at Asn-197 and Asn-204. A helical membrane pass occupies residues 214 to 234 (LSYLILFITDVVICLVTCLGL). At 235 to 240 (AKKSKC) the chain is on the cytoplasmic side. A helical membrane pass occupies residues 241–261 (LLLTMLCCGLIALMLSWASLA). At 262-388 (LETSSAVGTS…IGICYDGVEG (127 aa)) the chain is on the extracellular side. Intrachain disulfides connect Cys-274–Cys-382 and Cys-300–Cys-367. Asn-352 is a glycosylation site (N-linked (GlcNAc...) asparagine). The helical transmembrane segment at 389–409 (LLYLSLFSLLAAVAFTAMVCA) threads the bilayer. At 410 to 534 (MPRAWKHLAA…PNIYSNVFPA (125 aa)) the chain is on the cytoplasmic side.

This sequence belongs to the tweety family. In terms of assembly, forms cis-homodimers in the presence of Ca(+2) and forms monomers and trans-dimers in the absence of Ca(2+).

Its subcellular location is the cell membrane. It carries out the reaction chloride(in) = chloride(out). The catalysed reaction is L-glutamate(out) = L-glutamate(in). Functionally, may act as a calcium-independent, swelling-dependent volume-regulated anion channel (VRAC-swell) which plays a pivotal role in the process of regulatory volume decrease (RVD) in the brain through the efflux of anions like chloride and organic osmolytes like glutamate. Probable large-conductance Ca(2+)-activated chloride channel. The sequence is that of Protein tweety homolog 2 (ttyh2) from Xenopus laevis (African clawed frog).